We begin with the raw amino-acid sequence, 842 residues long: Valine--tRNA ligase (842 aa).

A 'HIGH' region motif is present at residues 86-96; that stretch reads PFTSGELHMGH. Residues 572–576 carry the 'KMSKS' region motif; it reads RMSKS. Lysine 575 serves as a coordination point for ATP.

It belongs to the class-I aminoacyl-tRNA synthetase family. ValS type 2 subfamily.

Its subcellular location is the cytoplasm. It catalyses the reaction tRNA(Val) + L-valine + ATP = L-valyl-tRNA(Val) + AMP + diphosphate. In terms of biological role, catalyzes the attachment of valine to tRNA(Val). As ValRS can inadvertently accommodate and process structurally similar amino acids such as threonine, to avoid such errors, it has a 'posttransfer' editing activity that hydrolyzes mischarged Thr-tRNA(Val) in a tRNA-dependent manner. This Saccharolobus solfataricus (strain ATCC 35092 / DSM 1617 / JCM 11322 / P2) (Sulfolobus solfataricus) protein is Valine--tRNA ligase.